A 30-amino-acid polypeptide reads, in one-letter code: Circulin A (30 aa).

Residues 1-30 constitute a cross-link (cyclopeptide (Gly-Asn)); it reads GIPCGESCVWIPCISAALGCSCKNKVCYRN. 3 cysteine pairs are disulfide-bonded: Cys4/Cys20, Cys8/Cys22, and Cys13/Cys27.

Post-translationally, this is a cyclic peptide. Expressed in fruit, pedicel, root and stem but not in leaf (at protein level).

Probably participates in a plant defense mechanism. This is Circulin A from Chassalia chartacea (Chassalia curviflora).